The primary structure comprises 339 residues: Nicotinate-nucleotide--dimethylbenzimidazole phosphoribosyltransferase (339 aa).

Catalysis depends on E306, which acts as the Proton acceptor.

The protein belongs to the CobT family.

It carries out the reaction 5,6-dimethylbenzimidazole + nicotinate beta-D-ribonucleotide = alpha-ribazole 5'-phosphate + nicotinate + H(+). It participates in nucleoside biosynthesis; alpha-ribazole biosynthesis; alpha-ribazole from 5,6-dimethylbenzimidazole: step 1/2. Catalyzes the synthesis of alpha-ribazole-5'-phosphate from nicotinate mononucleotide (NAMN) and 5,6-dimethylbenzimidazole (DMB). In Brucella abortus (strain S19), this protein is Nicotinate-nucleotide--dimethylbenzimidazole phosphoribosyltransferase.